The sequence spans 318 residues: Olfactory receptor 56A1 (318 aa).

Residues 1 to 32 (MIQPMASPSNSSTVPVSEFLLICFPNFQSWQH) lie on the Extracellular side of the membrane. An N-linked (GlcNAc...) asparagine glycan is attached at N10. The chain crosses the membrane as a helical span at residues 33–53 (WLSLPLSLLFLLAMGANTTLL). Over 54-61 (ITIQLEAS) the chain is Cytoplasmic. The helical transmembrane segment at 62–82 (LHQPLYYLLSLLSLLDIVLCL) threads the bilayer. Topologically, residues 83–106 (TVIPKVLAIFWYDLRSISFPACFL) are extracellular. The cysteines at positions 104 and 196 are disulfide-linked. Residues 107-127 (QMFIMNSFLPMESCTFMVMAY) form a helical membrane-spanning segment. Topologically, residues 128 to 146 (DRYVAICHPLRYPSIITNQ) are cytoplasmic. The chain crosses the membrane as a helical span at residues 147-167 (FVAKASVFIVVRNALLTAPIP). Over 168–203 (ILTSLLHYCGENVIENCICANLSVSRLSCDNFTLNR) the chain is Extracellular. Residues N188 and N198 are each glycosylated (N-linked (GlcNAc...) asparagine). The helical transmembrane segment at 204–224 (IYQFVAGWTLLGSDLFLIFLS) threads the bilayer. Topologically, residues 225–244 (YTFILRAVLRFKAEGAAVKA) are cytoplasmic. The chain crosses the membrane as a helical span at residues 245–265 (LSTCGSHFILILFFSTILLVV). Topologically, residues 266 to 280 (VLTNVARKKVPMDIL) are extracellular. The chain crosses the membrane as a helical span at residues 281-301 (ILLNVLHHLIPPALNPIVYGV). Residues 302–318 (RTKEIKQGIQKLLQRGR) lie on the Cytoplasmic side of the membrane.

The protein belongs to the G-protein coupled receptor 1 family.

It is found in the cell membrane. Its function is as follows. Odorant receptor. This chain is Olfactory receptor 56A1 (OR56A1), found in Homo sapiens (Human).